A 554-amino-acid polypeptide reads, in one-letter code: 3-(3-hydroxy-phenyl)propionate/3-hydroxycinnamic acid hydroxylase (554 aa).

Residues 17-46 and 285-295 each bind FAD; these read QVAIAGAGPVGLMMANYLGQMGIDVLVVEK and FRIDRVLLAGD.

Belongs to the PheA/TfdB FAD monooxygenase family. The cofactor is FAD.

It carries out the reaction 3-(3-hydroxyphenyl)propanoate + NADH + O2 + H(+) = 3-(2,3-dihydroxyphenyl)propanoate + NAD(+) + H2O. The catalysed reaction is (2E)-3-(3-hydroxyphenyl)prop-2-enoate + NADH + O2 + H(+) = (2E)-3-(2,3-dihydroxyphenyl)prop-2-enoate + NAD(+) + H2O. The protein operates within aromatic compound metabolism; 3-phenylpropanoate degradation. Its function is as follows. Catalyzes the insertion of one atom of molecular oxygen into position 2 of the phenyl ring of 3-(3-hydroxyphenyl)propionate (3-HPP) and hydroxycinnamic acid (3HCI). This Escherichia coli O8 (strain IAI1) protein is 3-(3-hydroxy-phenyl)propionate/3-hydroxycinnamic acid hydroxylase.